Reading from the N-terminus, the 124-residue chain is S-adenosylmethionine decarboxylase proenzyme (124 aa).

Residue S63 is the Schiff-base intermediate with substrate; via pyruvic acid of the active site. At S63 the chain carries Pyruvic acid (Ser); by autocatalysis. H68 serves as the catalytic Proton acceptor; for processing activity. The active-site Proton donor; for catalytic activity is the C83.

It belongs to the prokaryotic AdoMetDC family. Type 1 subfamily. As to quaternary structure, heterotetramer of two alpha and two beta chains arranged as a dimer of alpha/beta heterodimers. Requires pyruvate as cofactor. Post-translationally, is synthesized initially as an inactive proenzyme. Formation of the active enzyme involves a self-maturation process in which the active site pyruvoyl group is generated from an internal serine residue via an autocatalytic post-translational modification. Two non-identical subunits are generated from the proenzyme in this reaction, and the pyruvate is formed at the N-terminus of the alpha chain, which is derived from the carboxyl end of the proenzyme. The post-translation cleavage follows an unusual pathway, termed non-hydrolytic serinolysis, in which the side chain hydroxyl group of the serine supplies its oxygen atom to form the C-terminus of the beta chain, while the remainder of the serine residue undergoes an oxidative deamination to produce ammonia and the pyruvoyl group blocking the N-terminus of the alpha chain.

The catalysed reaction is S-adenosyl-L-methionine + H(+) = S-adenosyl 3-(methylsulfanyl)propylamine + CO2. The protein operates within amine and polyamine biosynthesis; S-adenosylmethioninamine biosynthesis; S-adenosylmethioninamine from S-adenosyl-L-methionine: step 1/1. In terms of biological role, catalyzes the decarboxylation of S-adenosylmethionine to S-adenosylmethioninamine (dcAdoMet), the propylamine donor required for the synthesis of the polyamines spermine and spermidine from the diamine putrescine. The chain is S-adenosylmethionine decarboxylase proenzyme from Anoxybacillus flavithermus (strain DSM 21510 / WK1).